A 235-amino-acid polypeptide reads, in one-letter code: Aspartate/glutamate leucyltransferase (235 aa).

The protein belongs to the R-transferase family. Bpt subfamily.

The protein resides in the cytoplasm. The enzyme catalyses N-terminal L-glutamyl-[protein] + L-leucyl-tRNA(Leu) = N-terminal L-leucyl-L-glutamyl-[protein] + tRNA(Leu) + H(+). It carries out the reaction N-terminal L-aspartyl-[protein] + L-leucyl-tRNA(Leu) = N-terminal L-leucyl-L-aspartyl-[protein] + tRNA(Leu) + H(+). Functionally, functions in the N-end rule pathway of protein degradation where it conjugates Leu from its aminoacyl-tRNA to the N-termini of proteins containing an N-terminal aspartate or glutamate. The protein is Aspartate/glutamate leucyltransferase of Shewanella putrefaciens (strain CN-32 / ATCC BAA-453).